The chain runs to 146 residues: Large ribosomal subunit protein uL15 (146 aa).

Basic and acidic residues predominate over residues Met1 to Arg18. Positions Met1–Gln54 are disordered. Over residues Ser42–Gly52 the composition is skewed to gly residues.

The protein belongs to the universal ribosomal protein uL15 family. As to quaternary structure, part of the 50S ribosomal subunit.

In terms of biological role, binds to the 23S rRNA. The sequence is that of Large ribosomal subunit protein uL15 from Staphylococcus aureus (strain Mu3 / ATCC 700698).